The following is a 359-amino-acid chain: Fc receptor-like A (359 aa).

Residues 1-27 (MKLGCVLMAWALYLSLGVLWVAQMLLA) form the signal peptide. 2 Ig-like C2-type domains span residues 70 to 159 (PFHL…ETAS) and 170 to 257 (PAPI…PQLE). 2 disulfides stabilise this stretch: Cys-99–Cys-143 and Cys-192–Cys-240. The tract at residues 259–313 (RVQGASSSAAPPTLNPAPQKSAAPGTAPEEAPGPLPPPPTPSSEDPGFSSPLGMP) is disordered. Positions 279 to 288 (SAAPGTAPEE) are enriched in low complexity. The segment covering 289 to 299 (APGPLPPPPTP) has biased composition (pro residues).

Monomer or homodimer; disulfide-linked. In terms of tissue distribution, expressed specifically in primary and secondary lymphoid tissues like lymph node, spleen and tonsil. Specifically expressed in B-cells with a high level in normal germinal center B-cells, centroblasts and in a subset of diffuse large B-cell lymphomas. Highly expressed in bone marrow B-cells and weakly in earlier B lineage cells. Expressed in pre-germinal and germinal center B-cells in secondary lymphoid tissues. Also expressed in melanoma and melanocytes.

Its subcellular location is the cytoplasm. In terms of biological role, may be implicated in B-cell differentiation and lymphomagenesis. The chain is Fc receptor-like A (FCRLA) from Homo sapiens (Human).